The sequence spans 309 residues: Homoserine kinase (309 aa).

ATP is bound at residue P95–A105.

The protein belongs to the GHMP kinase family. Homoserine kinase subfamily.

It is found in the cytoplasm. The enzyme catalyses L-homoserine + ATP = O-phospho-L-homoserine + ADP + H(+). It functions in the pathway amino-acid biosynthesis; L-threonine biosynthesis; L-threonine from L-aspartate: step 4/5. In terms of biological role, catalyzes the ATP-dependent phosphorylation of L-homoserine to L-homoserine phosphate. This chain is Homoserine kinase, found in Corynebacterium glutamicum (strain R).